The primary structure comprises 273 residues: Esterase pigG (273 aa).

Active-site charge relay system residues include serine 122, aspartate 215, and histidine 243.

This sequence belongs to the LovG family.

The protein operates within secondary metabolite biosynthesis. In terms of biological role, esterase; part of the gene cluster that mediates the biosynthesis of azaphilone pigments (MonAzPs), a complex mixture of compounds with a common azaphilone skeleton very widely used as food colorants. Within the pathway, pigG may assist the nrPKS pigA in the biosynthesis of the hexaketide precursor. The first step of the pathway is performed by the nrPKS pigA that forms the hexaketide precursor from successive condensations of five malonyl-CoA units, with a simple acetyl-CoA starter unit. The role of esterase pigG is not clear, but it may play at most a supplementary role in the formation of the benzaldehyde produced by the pigA nrPKS. This very reactive benzaldehyde is intercepted by the pigC ketoreductase that to provide the first stable enzyme-free MonAzPs intermediate, 6-(4-hydroxy-2-oxopentyl)-3-methyl-2,4-dioxocyclohexane carbaldehyde, also known as M7PKS-1. The FAD-dependent monooxygenase pigN hydroxylates M7PKS-1 at C-4, which triggers the formation of the pyran ring. PigJ, pigK and pigD are involved in the acetylation of the pyran ring. PigJ and pigK form the two subunits of a dedicated fungal FAS that produces the side chain fatty acyl moiety of MonAzPs and pigD transfers the fatty acyl chain to the C-4 alcohol. PigM and pigO are involved in the elimination of the omega-1 alcohol. PigM acts as an O-acetyltransferase that synthesizes the putative O-11 acetyl intermediate whereas pigO eliminates acetic acid to yield an intermediate with a C10(11) double bond. The dehydration of the C-11 alcohol followed by the reduction of the C6(7) double bond by the NAD(P)H-dependent oxidoreductase pigE increases the electrophilicity of the C-5 ketone of the resulting acyl benzopyran. This in turn sets up the C-5 ketone for an intramolecular Knoevenagel aldol condensation with the C-20 enol of the side chain. This condensation affords the characteristic linear tricyclic carbon skeletons of the yellow pigments that serve as the common precursors for the classical yellow pigments monascin and ankaflavin, orange pigments rubopunctatin and monascorubrin, and red pigments ribropunctamine and monascorubramine. The FAD-dependent oxidoreductase pigF is especially invoved in the biosynthesis of orange and red pigments via desaturation of C6(7). This Monascus ruber (Mold) protein is Esterase pigG.